Consider the following 695-residue polypeptide: Elongation factor G (695 aa).

The tr-type G domain maps to 10 to 285; the sequence is DKTRNIGIMA…GVVDYLPSPL (276 aa). GTP-binding positions include 19–26, 83–87, and 137–140; these read AHIDAGKT, DTPGH, and NKMD.

The protein belongs to the TRAFAC class translation factor GTPase superfamily. Classic translation factor GTPase family. EF-G/EF-2 subfamily.

It is found in the cytoplasm. Functionally, catalyzes the GTP-dependent ribosomal translocation step during translation elongation. During this step, the ribosome changes from the pre-translocational (PRE) to the post-translocational (POST) state as the newly formed A-site-bound peptidyl-tRNA and P-site-bound deacylated tRNA move to the P and E sites, respectively. Catalyzes the coordinated movement of the two tRNA molecules, the mRNA and conformational changes in the ribosome. This chain is Elongation factor G, found in Latilactobacillus sakei subsp. sakei (strain 23K) (Lactobacillus sakei subsp. sakei).